The primary structure comprises 518 residues: Arrestin-related trafficking adapter 10 (518 aa).

Lys118 participates in a covalent cross-link: Glycyl lysine isopeptide (Lys-Gly) (interchain with G-Cter in ubiquitin).

The protein belongs to the ART10 family. Interacts with RSP5. In terms of processing, ubiquitinated by RSP5.

It localises to the cytoplasm. In terms of biological role, may regulate endocytosis by recruiting RSP5 ubiquitin ligase activity to specific plasma membrane proteins in response to extracellular stimuli. This chain is Arrestin-related trafficking adapter 10 (ART10), found in Saccharomyces cerevisiae (strain YJM789) (Baker's yeast).